Reading from the N-terminus, the 87-residue chain is MVNMKASMFLTSAGLVPLFVVCYASESEEKEFPKEMLSSIFAVDNDFKQEERDCAGYMRECKEKLCCSGYVCSSRWKWCVLPAPWRR.

Positions methionine 1–alanine 24 are cleaved as a signal peptide. The propeptide occupies serine 25 to arginine 52. 3 cysteine pairs are disulfide-bonded: cysteine 54/cysteine 67, cysteine 61/cysteine 72, and cysteine 66/cysteine 79.

This sequence belongs to the neurotoxin 10 (Hwtx-1) family. 51 (Hntx-8) subfamily. Hntx-8 sub-subfamily. As to expression, expressed by the venom gland.

It is found in the secreted. In terms of biological role, ion channel inhibitor. In Cyriopagopus hainanus (Chinese bird spider), this protein is U3-theraphotoxin-Hhn1a 13.